The sequence spans 429 residues: Type II methyltransferase M.AgeI (429 aa).

Positions 1–429 constitute an SAM-dependent MTase C5-type domain; that stretch reads MKTIDLFCGA…MAETIKVAIS (429 aa). Residue cysteine 80 is part of the active site.

Belongs to the class I-like SAM-binding methyltransferase superfamily. C5-methyltransferase family.

It catalyses the reaction a 2'-deoxycytidine in DNA + S-adenosyl-L-methionine = a 5-methyl-2'-deoxycytidine in DNA + S-adenosyl-L-homocysteine + H(+). Its function is as follows. A methylase, recognizes the double-stranded sequence 5'-ACCGGT-3', methylates C-3 on both strands, and protects the DNA from cleavage by the AgeI endonuclease. In Thalassovita gelatinovora (Thalassobius gelatinovorus), this protein is Type II methyltransferase M.AgeI (ageIM).